The following is a 291-amino-acid chain: 4-hydroxy-tetrahydrodipicolinate synthase (291 aa).

T44 lines the pyruvate pocket. Y132 functions as the Proton donor/acceptor in the catalytic mechanism. The active-site Schiff-base intermediate with substrate is K160. I202 is a binding site for pyruvate.

Belongs to the DapA family. In terms of assembly, homotetramer; dimer of dimers.

Its subcellular location is the cytoplasm. The catalysed reaction is L-aspartate 4-semialdehyde + pyruvate = (2S,4S)-4-hydroxy-2,3,4,5-tetrahydrodipicolinate + H2O + H(+). It functions in the pathway amino-acid biosynthesis; L-lysine biosynthesis via DAP pathway; (S)-tetrahydrodipicolinate from L-aspartate: step 3/4. Its function is as follows. Catalyzes the condensation of (S)-aspartate-beta-semialdehyde [(S)-ASA] and pyruvate to 4-hydroxy-tetrahydrodipicolinate (HTPA). This is 4-hydroxy-tetrahydrodipicolinate synthase from Sphingopyxis alaskensis (strain DSM 13593 / LMG 18877 / RB2256) (Sphingomonas alaskensis).